A 453-amino-acid polypeptide reads, in one-letter code: Ribulose bisphosphate carboxylase large chain (453 aa).

Positions 1 to 2 (MS) are excised as a propeptide. Pro3 is subject to N-acetylproline. Lys14 carries the N6,N6,N6-trimethyllysine modification. The substrate site is built by Asn123 and Thr173. Lys175 serves as the catalytic Proton acceptor. Lys177 serves as a coordination point for substrate. Mg(2+) is bound by residues Lys201, Asp203, and Glu204. N6-carboxylysine is present on Lys201. The active-site Proton acceptor is the His294. Residues Arg295, His327, and Ser379 each coordinate substrate.

It belongs to the RuBisCO large chain family. Type I subfamily. As to quaternary structure, heterohexadecamer of 8 large chains and 8 small chains; disulfide-linked. The disulfide link is formed within the large subunit homodimers. Mg(2+) is required as a cofactor. In terms of processing, the disulfide bond which can form in the large chain dimeric partners within the hexadecamer appears to be associated with oxidative stress and protein turnover.

It is found in the plastid. Its subcellular location is the chloroplast. It catalyses the reaction 2 (2R)-3-phosphoglycerate + 2 H(+) = D-ribulose 1,5-bisphosphate + CO2 + H2O. It carries out the reaction D-ribulose 1,5-bisphosphate + O2 = 2-phosphoglycolate + (2R)-3-phosphoglycerate + 2 H(+). Functionally, ruBisCO catalyzes two reactions: the carboxylation of D-ribulose 1,5-bisphosphate, the primary event in carbon dioxide fixation, as well as the oxidative fragmentation of the pentose substrate in the photorespiration process. Both reactions occur simultaneously and in competition at the same active site. The polypeptide is Ribulose bisphosphate carboxylase large chain (Asperula laevigata (Smooth woodruff)).